The following is a 263-amino-acid chain: 3-methyl-2-oxobutanoate hydroxymethyltransferase (263 aa).

Positions 45 and 84 each coordinate Mg(2+). Residues 45–46 (DS), aspartate 84, and lysine 112 each bind 3-methyl-2-oxobutanoate. Glutamate 114 serves as a coordination point for Mg(2+). Glutamate 181 serves as the catalytic Proton acceptor.

Belongs to the PanB family. In terms of assembly, homodecamer; pentamer of dimers. It depends on Mg(2+) as a cofactor.

It localises to the cytoplasm. It carries out the reaction 3-methyl-2-oxobutanoate + (6R)-5,10-methylene-5,6,7,8-tetrahydrofolate + H2O = 2-dehydropantoate + (6S)-5,6,7,8-tetrahydrofolate. Its pathway is cofactor biosynthesis; (R)-pantothenate biosynthesis; (R)-pantoate from 3-methyl-2-oxobutanoate: step 1/2. In terms of biological role, catalyzes the reversible reaction in which hydroxymethyl group from 5,10-methylenetetrahydrofolate is transferred onto alpha-ketoisovalerate to form ketopantoate. This is 3-methyl-2-oxobutanoate hydroxymethyltransferase from Buchnera aphidicola subsp. Schizaphis graminum (strain Sg).